We begin with the raw amino-acid sequence, 149 residues long: Ribosome-binding factor A (149 aa).

This sequence belongs to the RbfA family. In terms of assembly, monomer. Binds 30S ribosomal subunits, but not 50S ribosomal subunits or 70S ribosomes.

The protein localises to the cytoplasm. Functionally, one of several proteins that assist in the late maturation steps of the functional core of the 30S ribosomal subunit. Associates with free 30S ribosomal subunits (but not with 30S subunits that are part of 70S ribosomes or polysomes). Required for efficient processing of 16S rRNA. May interact with the 5'-terminal helix region of 16S rRNA. The chain is Ribosome-binding factor A from Caulobacter vibrioides (strain ATCC 19089 / CIP 103742 / CB 15) (Caulobacter crescentus).